Here is a 191-residue protein sequence, read N- to C-terminus: uncharacterized protein (191 aa).

This is an uncharacterized protein from Methanocaldococcus jannaschii (strain ATCC 43067 / DSM 2661 / JAL-1 / JCM 10045 / NBRC 100440) (Methanococcus jannaschii).